The chain runs to 98 residues: Large ribosomal subunit protein bL27 (98 aa).

The disordered stretch occupies residues 1–22 (MAHKKGTGSTRNGRDSNAQRLG). Residues 7-19 (TGSTRNGRDSNAQ) are compositionally biased toward polar residues.

The protein belongs to the bacterial ribosomal protein bL27 family.

This Nostoc punctiforme (strain ATCC 29133 / PCC 73102) protein is Large ribosomal subunit protein bL27.